The following is a 298-amino-acid chain: Leucine-rich repeat-containing protein 55 (298 aa).

The N-terminal stretch at 1–34 (MGDTWAQLPWPGPPHSALLLVFFLLAAGVMHSDA) is a signal peptide. In terms of domain architecture, LRRNT spans 35 to 65 (GTSCPVLCTCRNQVVDCSNQRLFSVPPDLPM). 2 disulfide bridges follow: C38–C44 and C42–C51. LRR repeat units lie at residues 66–87 (DTRN…YLTC), 90–111 (ELRV…LFLH), 114–135 (RLAH…MFRE), 138–160 (GLVH…AFQG), and 163–186 (HLRD…EGLP). The region spanning 196–251 (NPWVCGCTMEPLLKWLRNRIQRCTADSQLAECRGPPEVEGAPLFSLTEESFKACHL) is the LRRCT domain. 2 cysteine pairs are disulfide-bonded: C200–C227 and C202–C249. A helical membrane pass occupies residues 259–279 (LFIAFVGFVVSIASVATNFLL).

As to quaternary structure, interacts with KCNMA1.

It localises to the cell membrane. In terms of biological role, auxiliary protein of the large-conductance, voltage and calcium-activated potassium channel (BK alpha). Modulates gating properties by producing a marked shift in the BK channel's voltage dependence of activation in the hyperpolarizing direction, and in the absence of calcium. This chain is Leucine-rich repeat-containing protein 55 (Lrrc55), found in Mus musculus (Mouse).